Reading from the N-terminus, the 273-residue chain is Undecaprenyl-diphosphatase (273 aa).

7 consecutive transmembrane segments (helical) span residues 13–35, 45–62, 82–102, 108–128, 186–206, 219–239, and 250–270; these read GLVE…VFGN, VFEI…VFEY, FVLN…LFDK, LFNP…ILWV, TEFS…YDVL, LILI…KALL, and FAYY…SGWI.

This sequence belongs to the UppP family.

Its subcellular location is the cell inner membrane. The catalysed reaction is di-trans,octa-cis-undecaprenyl diphosphate + H2O = di-trans,octa-cis-undecaprenyl phosphate + phosphate + H(+). In terms of biological role, catalyzes the dephosphorylation of undecaprenyl diphosphate (UPP). Confers resistance to bacitracin. This is Undecaprenyl-diphosphatase from Neisseria gonorrhoeae (strain ATCC 700825 / FA 1090).